Consider the following 285-residue polypeptide: HTH-type transcriptional regulator MurR (285 aa).

The HTH rpiR-type domain occupies 1–77 (MLYLTKIRNA…MALIGEYSAS (77 aa)). Positions 37 to 56 (SRKMAKQLGISQSSIVKFAQ) form a DNA-binding region, H-T-H motif. The region spanning 128 to 268 (IIEVISKAPF…FVGLVQLNDV (141 aa)) is the SIS domain.

As to quaternary structure, homotetramer.

It functions in the pathway amino-sugar metabolism; N-acetylmuramate degradation [regulation]. In terms of biological role, represses the expression of the murPQ operon involved in the uptake and degradation of N-acetylmuramic acid (MurNAc). Binds to two adjacent inverted repeats within the operator region. MurNAc 6-phosphate, the substrate of MurQ, is the specific inducer that weakens binding of MurR to the operator. The protein is HTH-type transcriptional regulator MurR of Escherichia coli O9:H4 (strain HS).